Consider the following 379-residue polypeptide: uncharacterized protein (379 aa).

Disordered regions lie at residues M1–P20, V227–H290, and P331–H371. The segment covering Q7–P20 has biased composition (low complexity). The segment covering G249–R261 has biased composition (basic and acidic residues).

This is an uncharacterized protein from Dryophytes versicolor (chameleon treefrog).